Here is a 492-residue protein sequence, read N- to C-terminus: Variant surface glycoprotein MITAT 1.1 (492 aa).

The signal sequence occupies residues 1 to 32 (MATGRAKNTKWARWLSTAGLIIVVTLPATTMA). Disulfide bonds link Cys-47-Cys-177 and Cys-155-Cys-222. N-linked (GlcNAc...) asparagine glycosylation is found at Asn-298 and Asn-471. The GPI-anchor amidated serine moiety is linked to residue Ser-475. The propeptide at 476–492 (NSFLIHKAPLLLAFLLF) is removed in mature form.

Its subcellular location is the cell membrane. Its function is as follows. VSG forms a coat on the surface of the parasite. The trypanosome evades the immune response of the host by expressing a series of antigenically distinct VSGs from an estimated 1000 VSG genes. In Trypanosoma brucei brucei, this protein is Variant surface glycoprotein MITAT 1.1.